Reading from the N-terminus, the 418-residue chain is NADH-quinone oxidoreductase subunit D (418 aa).

The protein belongs to the complex I 49 kDa subunit family. As to quaternary structure, NDH-1 is composed of 14 different subunits. Subunits NuoB, C, D, E, F, and G constitute the peripheral sector of the complex.

The protein resides in the cell inner membrane. It catalyses the reaction a quinone + NADH + 5 H(+)(in) = a quinol + NAD(+) + 4 H(+)(out). In terms of biological role, NDH-1 shuttles electrons from NADH, via FMN and iron-sulfur (Fe-S) centers, to quinones in the respiratory chain. The immediate electron acceptor for the enzyme in this species is believed to be ubiquinone. Couples the redox reaction to proton translocation (for every two electrons transferred, four hydrogen ions are translocated across the cytoplasmic membrane), and thus conserves the redox energy in a proton gradient. In Neisseria meningitidis serogroup A / serotype 4A (strain DSM 15465 / Z2491), this protein is NADH-quinone oxidoreductase subunit D.